A 1391-amino-acid polypeptide reads, in one-letter code: CAP-Gly domain-containing linker protein 1 (1391 aa).

The interval 1-53 (MSMLKPSGLKAPTKILKPGSTALKTPAAAAAPVEKTIPSEKASGPPSSETQEE) is disordered. Ser-48 is subject to Phosphoserine. A Phosphothreonine modification is found at Thr-50. Residues 78-120 (GETQFAPGQWAGIVLDEPIGKNDGSVAGVRYFQCEPLKGIFTR) form the CAP-Gly 1 domain. The important for tubulin binding stretch occupies residues 97 to 101 (GKNDG). The segment at 129–182 (QAEDEANGLQAAPGRTASPLSTAAATMVSSSPATPSNIPHKPSQSTAKEPSATP) is disordered. Residue Ser-146 is modified to Phosphoserine. Residues 146-182 (SPLSTAAATMVSSSPATPSNIPHKPSQSTAKEPSATP) are compositionally biased toward polar residues. Thr-181 is subject to Phosphothreonine. A phosphoserine mark is found at Ser-194, Ser-196, Ser-199, and Ser-203. In terms of domain architecture, CAP-Gly 2 spans 231 to 273 (GETDFAKGEWCGVELDEPLGKNDGAVAGTRYFQCQPKYGLFAP). Positions 302–331 (TPASLKRSPSASSLSSMSSVASSVSSKPSR) are enriched in low complexity. The segment at 302–336 (TPASLKRSPSASSLSSMSSVASSVSSKPSRTGLLT) is disordered. The residue at position 309 (Ser-309) is a Phosphoserine. Ser-311 carries the post-translational modification Phosphoserine; by PKA. 3 positions are modified to phosphoserine: Ser-314, Ser-347, and Ser-1189. The stretch at 349 to 1306 (TTALQEALKE…VEMMSEAALN (958 aa)) forms a coiled coil. The interval 1251–1272 (KRQLSSSSGNTDAQAEEDERAQ) is disordered. Residue Ser-1317 is modified to Phosphoserine. The segment at 1370–1387 (PYCEICEMFGHWATNCND) adopts a CCHC-type zinc-finger fold.

Interacts with MTOR; phosphorylates and regulates CLIP1. Interacts (via CAP-Gly domains) with tubulin. Interacts with SLAIN2. Interacts with TUBA1B, MAPRE1 and MAPRE3. Interacts (via zinc finger) with DCTN1. Binds preferentially to tyrosinated microtubules, and only marginally to detyrosinated microtubules. Post-translationally, phosphorylated. Phosphorylation induces conformational changes by increasing the affinity of the N-terminus for C-terminus, resulting in inhibition of its function thus decreasing its binding to microtubules and DCTN1. Exhibits a folded, autoinhibited conformation when phosphorylated and an open conformation when dephosphorylated with increased binding affinity to microtubules and DCTN1. Phosphorylation regulates its recruitment to tyrosinated microtubules and the recruitment of vesicular cargo to microtubules in neurons. Phosphorylation by MTOR may positively regulate CLIP1 association with microtubules. In terms of tissue distribution, expressed in the testes (at protein level).

Its subcellular location is the cytoplasm. It is found in the cytoskeleton. It localises to the cytoplasmic vesicle membrane. The protein localises to the cell projection. The protein resides in the ruffle. Its function is as follows. Binds to the plus end of microtubules and regulates the dynamics of the microtubule cytoskeleton. Promotes microtubule growth and microtubule bundling. Links cytoplasmic vesicles to microtubules and thereby plays an important role in intracellular vesicle trafficking. Plays a role macropinocytosis and endosome trafficking. The polypeptide is CAP-Gly domain-containing linker protein 1 (Clip1) (Mus musculus (Mouse)).